A 304-amino-acid polypeptide reads, in one-letter code: Glutaminase (304 aa).

Ser63, Asn114, Glu158, Asn165, Tyr189, Tyr240, and Val258 together coordinate substrate.

Belongs to the glutaminase family. In terms of assembly, homotetramer.

The catalysed reaction is L-glutamine + H2O = L-glutamate + NH4(+). The chain is Glutaminase from Shewanella loihica (strain ATCC BAA-1088 / PV-4).